Here is a 216-residue protein sequence, read N- to C-terminus: Glycerol-3-phosphate acyltransferase 3 (216 aa).

5 helical membrane passes run 6–26 (LLLV…YLVS), 58–78 (LVAS…GLVI), 92–112 (LLFA…WPVF), 125–145 (FGGM…VLII), and 158–178 (ITGV…SGFP).

The protein belongs to the PlsY family. In terms of assembly, probably interacts with PlsX.

It localises to the cell membrane. It catalyses the reaction an acyl phosphate + sn-glycerol 3-phosphate = a 1-acyl-sn-glycero-3-phosphate + phosphate. The protein operates within lipid metabolism; phospholipid metabolism. Catalyzes the transfer of an acyl group from acyl-phosphate (acyl-PO(4)) to glycerol-3-phosphate (G3P) to form lysophosphatidic acid (LPA). This enzyme utilizes acyl-phosphate as fatty acyl donor, but not acyl-CoA or acyl-ACP. This is Glycerol-3-phosphate acyltransferase 3 from Dehalococcoides mccartyi (strain CBDB1).